We begin with the raw amino-acid sequence, 398 residues long: MTALARRYDTQIHRRVTRTVMVGDVPVGSEHPIVVQSMINEDTLDIEAAVAGIIRLAEAGSEIVRVTTPSMAHAKAMGQIRKELRQRGCSVPLVADVHHNGVKIALEVAQHVDKVRINPGLFIFDKPDPNRQEFSPEEFAAIGQRIRETFEPLVTLLRDQNKALRIGVNHGSLAERMLFTYGDTPEGMVESAMEFVRICHELDFHNILISMKASRAPVMLAAYRLMADTMDKEGFNYPLHLGVTEAGDGDYGRIKSTAGIATLLADGLGDTLRVSLTEAPEKEIPVCYSILQSLGLRKTMVEYVACPSCGRTLFNLEEVLHKVRNATSHLTGLDIAVMGCIVNGPGEMADADYGYVGKTPGVISLYRGRDEIRKVPEAEGVEALIQLIKEDGRWVEPA.

4 residues coordinate [4Fe-4S] cluster: Cys306, Cys309, Cys340, and Glu347.

It belongs to the IspG family. It depends on [4Fe-4S] cluster as a cofactor.

It carries out the reaction (2E)-4-hydroxy-3-methylbut-2-enyl diphosphate + 2 oxidized [2Fe-2S]-[ferredoxin] + H2O = 2-C-methyl-D-erythritol 2,4-cyclic diphosphate + 2 reduced [2Fe-2S]-[ferredoxin] + H(+). Its pathway is isoprenoid biosynthesis; isopentenyl diphosphate biosynthesis via DXP pathway; isopentenyl diphosphate from 1-deoxy-D-xylulose 5-phosphate: step 5/6. Functionally, converts 2C-methyl-D-erythritol 2,4-cyclodiphosphate (ME-2,4cPP) into 1-hydroxy-2-methyl-2-(E)-butenyl 4-diphosphate. This is 4-hydroxy-3-methylbut-2-en-1-yl diphosphate synthase (ferredoxin) from Synechococcus sp. (strain CC9605).